A 186-amino-acid chain; its full sequence is Potassium-transporting ATPase KdpC subunit (186 aa).

Residues 9-29 (AAVVLFGGCLLVLGLLYPLAM) form a helical membrane-spanning segment.

The protein belongs to the KdpC family. The system is composed of three essential subunits: KdpA, KdpB and KdpC.

It localises to the cell membrane. Part of the high-affinity ATP-driven potassium transport (or Kdp) system, which catalyzes the hydrolysis of ATP coupled with the electrogenic transport of potassium into the cytoplasm. This subunit acts as a catalytic chaperone that increases the ATP-binding affinity of the ATP-hydrolyzing subunit KdpB by the formation of a transient KdpB/KdpC/ATP ternary complex. In Methanosphaerula palustris (strain ATCC BAA-1556 / DSM 19958 / E1-9c), this protein is Potassium-transporting ATPase KdpC subunit.